Reading from the N-terminus, the 281-residue chain is UPF0162 protein XF_1494 (281 aa).

2 TPR repeats span residues 193–226 (VRILRNLHSVYANTNRWDRAARCADRILKLVPNQ) and 227–260 (PEALRDRGLAYLQLGHRSGARNDLTRYLQLYPST).

It belongs to the UPF0162 family.

This chain is UPF0162 protein XF_1494, found in Xylella fastidiosa (strain 9a5c).